The primary structure comprises 75 residues: Veswaprin-b (75 aa).

An N-terminal signal peptide occupies residues 1-24 (MSSGGLLLLLGLLTLWAELTPISG). The interval 23 to 42 (SGQDRPKKPGLRPPRPQKPP) is disordered. Residues 27-72 (RPKKPGLRPPRPQKPPCVRECKNDWRCPGEQKCCRYGCIYECRDPI) enclose the WAP; atypical domain. Disulfide bonds link Cys43–Cys64, Cys47–Cys59, and Cys53–Cys68.

The protein belongs to the venom waprin family. Expressed by the venom gland.

It is found in the secreted. Functionally, damages membranes of susceptible bacteria. Has no hemolytic activity. Not toxic to mice. Does not inhibit the proteinases elastase and cathepsin G. The polypeptide is Veswaprin-b (Demansia vestigiata (Lesser black whip snake)).